A 359-amino-acid polypeptide reads, in one-letter code: DNA replication and repair protein RecF (359 aa).

ATP is bound at residue 30 to 37; the sequence is GPNGSGKT.

It belongs to the RecF family.

It localises to the cytoplasm. Its function is as follows. The RecF protein is involved in DNA metabolism; it is required for DNA replication and normal SOS inducibility. RecF binds preferentially to single-stranded, linear DNA. It also seems to bind ATP. In Psychromonas ingrahamii (strain DSM 17664 / CCUG 51855 / 37), this protein is DNA replication and repair protein RecF.